A 715-amino-acid chain; its full sequence is uncharacterized protein (715 aa).

Residues 688-708 (VWKFNPALYSTITNIFLLIIF) form a helical membrane-spanning segment.

The protein belongs to the plectrovirus ORF1 family.

It localises to the host membrane. This is an uncharacterized protein from Spiroplasma virus SpV1-R8A2 B (SpV1).